The following is a 313-amino-acid chain: MSFQHTTVLLQETVAALAPQRGGCYLDGTFGGGGHSRLLLEQCAPTGRVIGLDRDADAIANGQALVAQMAGRLTLVKAPFAQVAEVLQQLEIAALDGAMLDLGVSSHQLDTAERGFSFIRSGPLDMRMDGDSTTPTAAALLNTLDADALADIFFHYGEERHARRIARMVVKVRQQHPFTTTTDLAERIAHMTPGYSRIHPATRVFQGLRIAVNEELQQLEQALSVLIGLLKPGGHLAVISFHSLEDRIVKRLFRDAAKPPEDPVLRGLPIAQAQRPKATLKLVHNKPLTPSEAEIEQNPRARSAKLRVAQKLA.

Residues 33-35, aspartate 53, phenylalanine 80, aspartate 101, and glutamine 108 contribute to the S-adenosyl-L-methionine site; that span reads GGH. The segment at 282–313 is disordered; it reads LVHNKPLTPSEAEIEQNPRARSAKLRVAQKLA.

The protein belongs to the methyltransferase superfamily. RsmH family.

Its subcellular location is the cytoplasm. The catalysed reaction is cytidine(1402) in 16S rRNA + S-adenosyl-L-methionine = N(4)-methylcytidine(1402) in 16S rRNA + S-adenosyl-L-homocysteine + H(+). Specifically methylates the N4 position of cytidine in position 1402 (C1402) of 16S rRNA. This chain is Ribosomal RNA small subunit methyltransferase H, found in Magnetococcus marinus (strain ATCC BAA-1437 / JCM 17883 / MC-1).